A 387-amino-acid chain; its full sequence is Cobalt-precorrin-5B C(1)-methyltransferase (387 aa).

The protein belongs to the CbiD family.

The catalysed reaction is Co-precorrin-5B + S-adenosyl-L-methionine = Co-precorrin-6A + S-adenosyl-L-homocysteine. The protein operates within cofactor biosynthesis; adenosylcobalamin biosynthesis; cob(II)yrinate a,c-diamide from sirohydrochlorin (anaerobic route): step 6/10. In terms of biological role, catalyzes the methylation of C-1 in cobalt-precorrin-5B to form cobalt-precorrin-6A. The sequence is that of Cobalt-precorrin-5B C(1)-methyltransferase from Desulfitobacterium hafniense (strain Y51).